The following is a 141-amino-acid chain: MKSTFALVFGILMVIAHLSFADEKVLCFDNSEETLNKEIKLFEQCGVTKDNANEENFNEAYICVLEKMEVLDENNQIVIEKFKETEKTEIVNKEEELMAAVDECAENKPTAEPKEFIQCYDEKVDKLCPDDKDIFEEDMEE.

The first 21 residues, 1-21, serve as a signal peptide directing secretion; sequence MKSTFALVFGILMVIAHLSFA.

Belongs to the scoloptoxin-17 family. Contains 3 disulfide bonds. Expressed by the venom gland.

The protein resides in the secreted. The protein is U-scoloptoxin(17)-Er3a of Ethmostigmus rubripes (Giant centipede).